The following is a 289-amino-acid chain: Phosphatidylserine decarboxylase proenzyme (289 aa).

Catalysis depends on charge relay system; for autoendoproteolytic cleavage activity residues Asp89, His146, and Ser252. Ser252 (schiff-base intermediate with substrate; via pyruvic acid; for decarboxylase activity) is an active-site residue. Ser252 is modified (pyruvic acid (Ser); by autocatalysis).

This sequence belongs to the phosphatidylserine decarboxylase family. PSD-B subfamily. Prokaryotic type I sub-subfamily. Heterodimer of a large membrane-associated beta subunit and a small pyruvoyl-containing alpha subunit. Pyruvate serves as cofactor. In terms of processing, is synthesized initially as an inactive proenzyme. Formation of the active enzyme involves a self-maturation process in which the active site pyruvoyl group is generated from an internal serine residue via an autocatalytic post-translational modification. Two non-identical subunits are generated from the proenzyme in this reaction, and the pyruvate is formed at the N-terminus of the alpha chain, which is derived from the carboxyl end of the proenzyme. The autoendoproteolytic cleavage occurs by a canonical serine protease mechanism, in which the side chain hydroxyl group of the serine supplies its oxygen atom to form the C-terminus of the beta chain, while the remainder of the serine residue undergoes an oxidative deamination to produce ammonia and the pyruvoyl prosthetic group on the alpha chain. During this reaction, the Ser that is part of the protease active site of the proenzyme becomes the pyruvoyl prosthetic group, which constitutes an essential element of the active site of the mature decarboxylase.

It is found in the cell membrane. The enzyme catalyses a 1,2-diacyl-sn-glycero-3-phospho-L-serine + H(+) = a 1,2-diacyl-sn-glycero-3-phosphoethanolamine + CO2. It participates in phospholipid metabolism; phosphatidylethanolamine biosynthesis; phosphatidylethanolamine from CDP-diacylglycerol: step 2/2. In terms of biological role, catalyzes the formation of phosphatidylethanolamine (PtdEtn) from phosphatidylserine (PtdSer). This is Phosphatidylserine decarboxylase proenzyme from Shewanella putrefaciens (strain CN-32 / ATCC BAA-453).